A 90-amino-acid chain; its full sequence is Small ribosomal subunit protein uS15c (90 aa).

This sequence belongs to the universal ribosomal protein uS15 family. In terms of assembly, part of the 30S ribosomal subunit.

The protein resides in the plastid. The protein localises to the chloroplast. The sequence is that of Small ribosomal subunit protein uS15c (rps15) from Glycine max (Soybean).